Here is a 199-residue protein sequence, read N- to C-terminus: Interleukin-11 (199 aa).

The signal sequence occupies residues 1–21; that stretch reads MNCVCRLVLVVLSLWPDTAVA. Residues 182–190 form an important for interaction with IL11RA and for the stimulation of cell proliferation region; it reads HLTLDWAVR.

It belongs to the IL-6 superfamily. Interacts with IL11RA to associate with IL6ST, giving rise to a multimeric signaling complex.

The protein resides in the secreted. Its function is as follows. Cytokine that stimulates the proliferation of hematopoietic stem cells and megakaryocyte progenitor cells and induces megakaryocyte maturation resulting in increased platelet production. Also promotes the proliferation of hepatocytes in response to liver damage. Binding to its receptor formed by IL6ST and IL11RA activates a signaling cascade that promotes cell proliferation. Signaling leads to the activation of intracellular protein kinases and the phosphorylation of STAT3. The interaction with the membrane-bound IL11RA and IL6ST stimulates 'classic signaling', whereas the binding of IL11 and soluble IL11RA to IL6ST stimulates 'trans-signaling'. In Macaca fascicularis (Crab-eating macaque), this protein is Interleukin-11 (IL11).